The chain runs to 921 residues: Probable dipeptidyl-aminopeptidase B (921 aa).

The tract at residues 1 to 33 is disordered; it reads MAGHTEENAQLLSTEQESVSRHSSDSAASTAST. The Cytoplasmic segment spans residues 1–109; sequence MAGHTEENAQ…NKSVDKKLRK (109 aa). Polar residues predominate over residues 8–17; that stretch reads NAQLLSTEQE. The chain crosses the membrane as a helical; Signal-anchor for type II membrane protein span at residues 110 to 130; it reads LIWIVGGVFIGAWVLALFIFL. Residues 131–921 lie on the Vacuolar side of the membrane; sequence GKQAYKHSSE…VPLQIDAAKV (791 aa). N362 carries an N-linked (GlcNAc...) asparagine glycan. S768 functions as the Charge relay system in the catalytic mechanism. An N-linked (GlcNAc...) asparagine glycan is attached at N822. Catalysis depends on charge relay system residues D845 and H878.

This sequence belongs to the peptidase S9B family.

Its subcellular location is the vacuole membrane. The catalysed reaction is Release of an N-terminal dipeptide, Xaa-Yaa-|-Zaa-, from a polypeptide, preferentially when Yaa is Pro, provided Zaa is neither Pro nor hydroxyproline.. Its function is as follows. Type IV dipeptidyl-peptidase which removes N-terminal dipeptides sequentially from polypeptides having unsubstituted N-termini provided that the penultimate residue is proline. The protein is Probable dipeptidyl-aminopeptidase B (dapB) of Sclerotinia sclerotiorum (strain ATCC 18683 / 1980 / Ss-1) (White mold).